The primary structure comprises 411 residues: MTFIEEFIYKGYLHQCTDLDQLTAITQEVKIAAYIGFDCTATSLHIGSLMQIMILRLLQKHGHTPIVIIGGGTSKIGDPSGKEVTRKALTQEDIKRNTAGIKKSLSKFIKFGKDQGDAIILDNAEWLDSLNYLDFLRDFGRHFSVNRMLTMDSVKLRLERSHHLSFLELNYMLLQAYDFYYLSKHYNCILQLGGSDQWGNIVIGADLIRRISGKEVFGMTTPLLTTASGAKMGKTAAGAVWLNEDLLSPYDYYQYWRNCEDADVIRFAKLYSELDIIELNKFEHLVSEDINAAKKQLAYELTKLCHGERLAKLALETAVRIFEQGDIDENLHTFILAPEILQAGISAYKLFYNVNLARSKSEARKIIRGKGAKINDQLVEDENMTIDTNFLLDKKVIKLSVGKKRHILVKV.

Residue tyrosine 34 coordinates L-tyrosine. The 'HIGH' region signature appears at 39 to 48 (CTATSLHIGS). L-tyrosine contacts are provided by tyrosine 171 and glutamine 175. Positions 231–235 (KMGKT) match the 'KMSKS' region motif. Lysine 234 serves as a coordination point for ATP. Residues 345 to 411 (ISAYKLFYNV…GKKRHILVKV (67 aa)) form the S4 RNA-binding domain.

Belongs to the class-I aminoacyl-tRNA synthetase family. TyrS type 1 subfamily. Homodimer.

It localises to the cytoplasm. The enzyme catalyses tRNA(Tyr) + L-tyrosine + ATP = L-tyrosyl-tRNA(Tyr) + AMP + diphosphate + H(+). In terms of biological role, catalyzes the attachment of tyrosine to tRNA(Tyr) in a two-step reaction: tyrosine is first activated by ATP to form Tyr-AMP and then transferred to the acceptor end of tRNA(Tyr). This Rickettsia typhi (strain ATCC VR-144 / Wilmington) protein is Tyrosine--tRNA ligase.